The following is a 205-amino-acid chain: Small ribosomal subunit protein uS4c (205 aa).

Residues 22–42 are disordered; it reads TSKISKKTNTPGEHGQPQNKL. Polar residues predominate over residues 28–42; that stretch reads KTNTPGEHGQPQNKL. The 64-residue stretch at 94–157 folds into the S4 RNA-binding domain; sequence MRLDNIVYRL…ASRDLVKKFV (64 aa).

The protein belongs to the universal ribosomal protein uS4 family. As to quaternary structure, part of the 30S ribosomal subunit. Contacts protein S5. The interaction surface between S4 and S5 is involved in control of translational fidelity.

Its subcellular location is the plastid. It localises to the chloroplast. In terms of biological role, one of the primary rRNA binding proteins, it binds directly to 16S rRNA where it nucleates assembly of the body of the 30S subunit. Its function is as follows. With S5 and S12 plays an important role in translational accuracy. This chain is Small ribosomal subunit protein uS4c (rps4), found in Tupiella akineta (Green alga).